Consider the following 542-residue polypeptide: CTP synthase (542 aa).

Positions 1–265 (MARYIFITGG…DQEVLSAFGI (265 aa)) are amidoligase domain. Ser13 provides a ligand contact to CTP. Ser13 is a UTP binding site. 14-19 (SLGKGL) is a binding site for ATP. Tyr54 is a binding site for L-glutamine. Asp71 provides a ligand contact to ATP. 2 residues coordinate Mg(2+): Asp71 and Glu139. Residues 146-148 (DIE), 186-191 (KTKPTQ), and Lys222 each bind CTP. UTP-binding positions include 186–191 (KTKPTQ) and Lys222. 238–240 (RDV) provides a ligand contact to ATP. A Glutamine amidotransferase type-1 domain is found at 291 to 541 (TIAIVGKYTG…IAAAMEQSRL (251 aa)). Gly353 is a binding site for L-glutamine. Cys380 functions as the Nucleophile; for glutamine hydrolysis in the catalytic mechanism. Residues 381–384 (FGMQ), Glu404, and Arg469 contribute to the L-glutamine site. Active-site residues include His514 and Glu516.

Belongs to the CTP synthase family. In terms of assembly, homotetramer.

The catalysed reaction is UTP + L-glutamine + ATP + H2O = CTP + L-glutamate + ADP + phosphate + 2 H(+). It catalyses the reaction L-glutamine + H2O = L-glutamate + NH4(+). It carries out the reaction UTP + NH4(+) + ATP = CTP + ADP + phosphate + 2 H(+). It functions in the pathway pyrimidine metabolism; CTP biosynthesis via de novo pathway; CTP from UDP: step 2/2. With respect to regulation, allosterically activated by GTP, when glutamine is the substrate; GTP has no effect on the reaction when ammonia is the substrate. The allosteric effector GTP functions by stabilizing the protein conformation that binds the tetrahedral intermediate(s) formed during glutamine hydrolysis. Inhibited by the product CTP, via allosteric rather than competitive inhibition. In terms of biological role, catalyzes the ATP-dependent amination of UTP to CTP with either L-glutamine or ammonia as the source of nitrogen. Regulates intracellular CTP levels through interactions with the four ribonucleotide triphosphates. The sequence is that of CTP synthase from Beijerinckia indica subsp. indica (strain ATCC 9039 / DSM 1715 / NCIMB 8712).